The sequence spans 201 residues: Troponin I (201 aa).

A1 is modified (N-acetylalanine). Residues 1 to 33 (ADKAKAAEEAKKKQDDIDRKKAEVRKRLEEQSL) show a composition bias toward basic and acidic residues. A disordered region spans residues 1–45 (ADKAKAAEEAKKKQDDIDRKKAEVRKRLEEQSLKKQKKGFMTPER). Residues 108–117 (IESDKYDVEL) form a troponin T-interaction region. The actin-binding stretch occupies residues 135–148 (DLRGKFIKPTLKKV). N6,N6,N6-trimethyllysine occurs at positions 142 and 146. The tract at residues 182–201 (EDDKGATEGDGPAAEEVAAE) is disordered.

This sequence belongs to the troponin I family.

Its function is as follows. Troponin I is the actomyosin ATPase inhibitory subunit present in the thin filament regulatory complex. The protein is Troponin I of Astacus leptodactylus (Turkish narrow-clawed crayfish).